Consider the following 113-residue polypeptide: Signal peptidase complex subunit 1 (113 aa).

The Cytoplasmic segment spans residues 1–32 (MDGMIAMLPAPLQQLSSHIDFQGQKVAERTYQ). The helical transmembrane segment at 33-53 (VILTLAGIIGFFVGYSTQQLS) threads the bilayer. The Lumenal portion of the chain corresponds to 54-57 (YAMY). Residues 58-78 (TVMGAAVFTALIILPPWPFLF) form a helical membrane-spanning segment. The Cytoplasmic portion of the chain corresponds to 79-113 (RKNPIVWQTPIEEQEASSSSDNEKKDKKKETKKTK). The disordered stretch occupies residues 89 to 113 (IEEQEASSSSDNEKKDKKKETKKTK).

Belongs to the SPCS1 family. As to quaternary structure, component of the signal peptidase complex (SPC) composed of a catalytic subunit sec-11 and three accessory subunits spcs-1, spcs-2 and spcs-3. The complex induces a local thinning of the ER membrane which is used to measure the length of the signal peptide (SP) h-region of protein substrates. This ensures the selectivity of the complex towards h-regions shorter than 18-20 amino acids.

It is found in the endoplasmic reticulum membrane. In terms of biological role, component of the signal peptidase complex (SPC) which catalyzes the cleavage of N-terminal signal sequences from nascent proteins as they are translocated into the lumen of the endoplasmic reticulum. Dispensable for SPC enzymatic activity. The chain is Signal peptidase complex subunit 1 from Caenorhabditis briggsae.